Consider the following 247-residue polypeptide: Ubiquinone biosynthesis O-methyltransferase (247 aa).

Arg39, Gly70, Asp91, and Met134 together coordinate S-adenosyl-L-methionine.

This sequence belongs to the methyltransferase superfamily. UbiG/COQ3 family.

The catalysed reaction is a 3-demethylubiquinol + S-adenosyl-L-methionine = a ubiquinol + S-adenosyl-L-homocysteine + H(+). It carries out the reaction a 3-(all-trans-polyprenyl)benzene-1,2-diol + S-adenosyl-L-methionine = a 2-methoxy-6-(all-trans-polyprenyl)phenol + S-adenosyl-L-homocysteine + H(+). Its pathway is cofactor biosynthesis; ubiquinone biosynthesis. Its function is as follows. O-methyltransferase that catalyzes the 2 O-methylation steps in the ubiquinone biosynthetic pathway. The protein is Ubiquinone biosynthesis O-methyltransferase of Cereibacter sphaeroides (strain KD131 / KCTC 12085) (Rhodobacter sphaeroides).